Here is a 726-residue protein sequence, read N- to C-terminus: uncharacterized protein (726 aa).

The 126-residue stretch at 10–135 folds into the Thioredoxin domain; sequence MRISWVVAFI…LLDFVETHLN (126 aa). Disordered regions lie at residues 133–153 and 227–280; these read HLNPDTDPDIPSDEDVLTDED and VTSV…NPTG. A compositionally biased stretch (acidic residues) spans 138-153; sequence TDPDIPSDEDVLTDED. A helical transmembrane segment spans residues 675–695; sequence IRVLYMVLGIVTVGILVWYFS. Position 708 is a phosphoserine (S708).

It localises to the membrane. This is an uncharacterized protein from Schizosaccharomyces pombe (strain 972 / ATCC 24843) (Fission yeast).